The chain runs to 447 residues: Glycylpeptide N-tetradecanoyltransferase (447 aa).

Tetradecanoyl-CoA contacts are provided by residues 38-41 (YKFW), 171-173 (LCV), and 179-183 (SKRLA). The active-site Proton acceptor; via carboxylate is the Leu447.

This sequence belongs to the NMT family. Monomer.

The protein localises to the cytoplasm. The enzyme catalyses N-terminal glycyl-[protein] + tetradecanoyl-CoA = N-tetradecanoylglycyl-[protein] + CoA + H(+). Its function is as follows. Adds a myristoyl group to the N-terminal glycine residue of certain cellular proteins. This Kluyveromyces lactis (strain ATCC 8585 / CBS 2359 / DSM 70799 / NBRC 1267 / NRRL Y-1140 / WM37) (Yeast) protein is Glycylpeptide N-tetradecanoyltransferase (NMT1).